Reading from the N-terminus, the 266-residue chain is UPF0354 protein lin1649 (266 aa).

The protein belongs to the UPF0354 family.

The polypeptide is UPF0354 protein lin1649 (Listeria innocua serovar 6a (strain ATCC BAA-680 / CLIP 11262)).